The primary structure comprises 291 residues: MAITTAASRLGVAPYNESRPVELRPDFSLDDAKMVIRAVYRQVLGNDYIMDSERLKGAESLLTNGSISVREFVRTVAKSELYKKKFLYNNFQTRVIELNYKHLLGRAPFSEDEVIFHLDLYENQGFDADIDSYIDSVEYQENFGENIVPYYRFNNQVGDRTVGFTRMFRLYRGYANSDRSQLERSSSRLATELGQNTVSAIVGPSGSNAGWAYRPSRAGNTPAKALGGTVPFGQASKLFRVEITAISAPGYPKVRRSNKAVIVPFEQLNQTLQQINRLGGKVASITPASLS.

The PBS-linker domain occupies 2-179 (AITTAASRLG…LYRGYANSDR (178 aa)). Positions 236-288 (SKLFRVEITAISAPGYPKVRRSNKAVIVPFEQLNQTLQQINRLGGKVASITPA) constitute a CpcD-like domain.

It belongs to the phycobilisome linker protein family. Part of 2 PBS rod complexes, the conventional CpcG-PBS rod and a photosystem I-specific CpcL-PBS rod, both of which include ferredoxin--NADP reductase (petH). CpcG-PBS has on average 3 stacked phycocyanin hexamers (PC, CpcA and CpcB). Linker CpcG connects the PC stack to the thylakoid, the hexamers are linked by 1 copy of CpcC1, 1 copy of CpcC2 and the stack is terminated by a single copy of CpcD. The CpcL-PBS has on average 5 stacked phycocyanin hexamers (PC, CpcA and CpcB). Linker CpcL connects the PC stack to the thylakoid, the hexamers are linked by 1 copy of CpcC1, 3 copies of CpcC2 and the stack is terminated by a single copy of CpcD.

The protein localises to the cellular thylakoid membrane. Rod linker protein, connecting hexameric phycocyanin (PC, made by cpcA and cpcB) rods in the phycobilisome (PBS). PC is the major phycobiliprotein in PBS rods. Linker polypeptides determine the state of aggregation and the location of the disk-shaped phycobiliprotein units within the phycobilisome and modulate their spectroscopic properties in order to mediate a directed and optimal energy transfer. This chain is Phycobilisome 32.1 kDa linker polypeptide, phycocyanin-associated, rod 1 (cpcC1), found in Synechocystis sp. (strain ATCC 27184 / PCC 6803 / Kazusa).